We begin with the raw amino-acid sequence, 859 residues long: Replication origin-binding protein (859 aa).

Residues 70–235 (PLAADARRVT…AALRGAGSVH (166 aa)) enclose the Helicase ATP-binding domain. 83 to 90 (APMGSGKT) lines the ATP pocket.

The protein belongs to the herpesviridae OriBP family. In terms of assembly, homodimer. Interacts with the major DNA-binding protein. Interacts with the helicase/primase component UL8 and the polymerase accessory protein.

It is found in the host nucleus. Functionally, functions as a docking protein to recruit essential components of the viral replication machinery to viral DNA origins. In the presence of the major DNA-binding protein, opens dsDNA leading to a conformational change in the origin that facilitates DNA unwinding and subsequent replication. The polypeptide is Replication origin-binding protein (UL9) (Bovine herpesvirus 1.1 (strain Cooper) (BoHV-1)).